Reading from the N-terminus, the 396-residue chain is Elongation factor Tu (396 aa).

Residues 11 to 205 (KPHVNIGTIG…TVDEYIPTPE (195 aa)) enclose the tr-type G domain. Residues 20–27 (GHVDHGKT) are G1. Residue 20-27 (GHVDHGKT) coordinates GTP. Residue threonine 27 participates in Mg(2+) binding. Positions 61–65 (GITIN) are G2. A G3 region spans residues 82-85 (DAPG). Residues 82 to 86 (DAPGH) and 137 to 140 (NKVD) contribute to the GTP site. The interval 137-140 (NKVD) is G4. Positions 175 to 177 (SAL) are G5.

Belongs to the TRAFAC class translation factor GTPase superfamily. Classic translation factor GTPase family. EF-Tu/EF-1A subfamily. In terms of assembly, monomer.

It localises to the cytoplasm. The enzyme catalyses GTP + H2O = GDP + phosphate + H(+). In terms of biological role, GTP hydrolase that promotes the GTP-dependent binding of aminoacyl-tRNA to the A-site of ribosomes during protein biosynthesis. This chain is Elongation factor Tu, found in Lactobacillus johnsonii (strain CNCM I-12250 / La1 / NCC 533).